The chain runs to 5121 residues: Hydrocephalus-inducing protein homolog (5121 aa).

Positions 363–754 (EFFEECITDP…VLFSSPTPSG (392 aa)) are interaction with KIF9. A compositionally biased stretch (basic residues) spans 956–967 (LSKKGRVKKGHA). Disordered regions lie at residues 956–987 (LSKK…SPVF), 1925–1951 (LAQE…TSLS), 2155–2186 (SKAD…LPPG), 2333–2459 (EQER…KFKT), 2482–2534 (LPPA…AERE), 2664–2684 (TNTT…KQKM), and 3852–3874 (KPDH…TGST). Positions 1908-1933 (EIKKSKEEQMRAKYLENLAQENEEED) form a coiled coil. Positions 1936 to 1951 (SSDQGTSNSTKRTSLS) are enriched in polar residues. Positions 2267–2365 (AQDYAAMKAQ…EDELKRRVKK (99 aa)) form a coiled coil. 5 stretches are compositionally biased toward basic and acidic residues: residues 2333–2360 (EQER…DELK), 2393–2418 (VDVK…EELN), 2444–2453 (DNSKDPDKQL), 2489–2498 (EAPHEPDDQR), and 2509–2534 (KDRE…AERE). A coiled-coil region spans residues 2504–2549 (GRRGRKDRERERLEKERTEKERLEREKAERERLEKLRALEERSDWE). Polar residues-rich tracts occupy residues 2664–2679 (TNTT…SSKG) and 3857–3874 (GSAQ…TGST).

Interacts with KIF9.

The protein resides in the cell projection. The protein localises to the cilium. Its subcellular location is the cytoplasm. It localises to the cytoskeleton. It is found in the cilium axoneme. The protein resides in the flagellum. Functionally, required for ciliary motility. The sequence is that of Hydrocephalus-inducing protein homolog (HYDIN) from Homo sapiens (Human).